The sequence spans 71 residues: Small ribosomal subunit protein bS21 (71 aa).

Positions 38 to 71 (YEKPTTERKRARASAIKRHAKKLARENARRTRLY) are disordered. The segment covering 46–59 (KRARASAIKRHAKK) has biased composition (basic residues). Basic and acidic residues predominate over residues 60 to 71 (LARENARRTRLY).

Belongs to the bacterial ribosomal protein bS21 family.

In Hamiltonella defensa subsp. Acyrthosiphon pisum (strain 5AT), this protein is Small ribosomal subunit protein bS21.